The following is a 236-amino-acid chain: Uridylate kinase (236 aa).

10–13 (KLSG) serves as a coordination point for ATP. Residue G52 coordinates UMP. G53 and R57 together coordinate ATP. UMP contacts are provided by residues D72 and 133–140 (TGNPFFTT). ATP-binding residues include T160, Y166, and D169.

It belongs to the UMP kinase family. In terms of assembly, homohexamer.

The protein resides in the cytoplasm. It carries out the reaction UMP + ATP = UDP + ADP. The protein operates within pyrimidine metabolism; CTP biosynthesis via de novo pathway; UDP from UMP (UMPK route): step 1/1. With respect to regulation, inhibited by UTP. In terms of biological role, catalyzes the reversible phosphorylation of UMP to UDP. This is Uridylate kinase from Cupriavidus pinatubonensis (strain JMP 134 / LMG 1197) (Cupriavidus necator (strain JMP 134)).